A 225-amino-acid chain; its full sequence is Ribose-5-phosphate isomerase A (225 aa).

Positions 1–20 (MKQSGGTEAQKRRAGKQAAD) are disordered. Residues 32–35 (TGST), 86–89 (DGAD), and 98–101 (KGGG) contribute to the substrate site. The active-site Proton acceptor is E107. K125 is a binding site for substrate.

Belongs to the ribose 5-phosphate isomerase family. In terms of assembly, homodimer.

It carries out the reaction aldehydo-D-ribose 5-phosphate = D-ribulose 5-phosphate. The protein operates within carbohydrate degradation; pentose phosphate pathway; D-ribose 5-phosphate from D-ribulose 5-phosphate (non-oxidative stage): step 1/1. In terms of biological role, catalyzes the reversible conversion of ribose-5-phosphate to ribulose 5-phosphate. The polypeptide is Ribose-5-phosphate isomerase A (Natronomonas pharaonis (strain ATCC 35678 / DSM 2160 / CIP 103997 / JCM 8858 / NBRC 14720 / NCIMB 2260 / Gabara) (Halobacterium pharaonis)).